The primary structure comprises 421 residues: Imidazolonepropionase (421 aa).

The Fe(3+) site is built by His-81 and His-83. Residues His-81 and His-83 each coordinate Zn(2+). Arg-90, Tyr-153, and His-186 together coordinate 4-imidazolone-5-propanoate. Tyr-153 serves as a coordination point for N-formimidoyl-L-glutamate. His-251 contacts Fe(3+). His-251 lines the Zn(2+) pocket. Glu-254 serves as a coordination point for 4-imidazolone-5-propanoate. Residue Asp-326 coordinates Fe(3+). Position 326 (Asp-326) interacts with Zn(2+). 2 residues coordinate N-formimidoyl-L-glutamate: Asn-328 and Gly-330. Ser-331 is a 4-imidazolone-5-propanoate binding site.

The protein belongs to the metallo-dependent hydrolases superfamily. HutI family. The cofactor is Zn(2+). Fe(3+) is required as a cofactor.

It localises to the cytoplasm. It carries out the reaction 4-imidazolone-5-propanoate + H2O = N-formimidoyl-L-glutamate. The protein operates within amino-acid degradation; L-histidine degradation into L-glutamate; N-formimidoyl-L-glutamate from L-histidine: step 3/3. Functionally, catalyzes the hydrolytic cleavage of the carbon-nitrogen bond in imidazolone-5-propanoate to yield N-formimidoyl-L-glutamate. It is the third step in the universal histidine degradation pathway. The sequence is that of Imidazolonepropionase from Streptococcus pyogenes serotype M2 (strain MGAS10270).